We begin with the raw amino-acid sequence, 283 residues long: Polyamine aminopropyltransferase (283 aa).

Residues 2 to 237 (ELWYTEEHTD…GHWLFGFASK (236 aa)) form the PABS domain. Gln31 contributes to the S-methyl-5'-thioadenosine binding site. Residues His62 and Asp86 each coordinate spermidine. Residues Glu106 and 137–138 (DG) contribute to the S-methyl-5'-thioadenosine site. Asp155 functions as the Proton acceptor in the catalytic mechanism. 155–158 (DSTD) is a binding site for spermidine. An S-methyl-5'-thioadenosine-binding site is contributed by Pro162.

Belongs to the spermidine/spermine synthase family. In terms of assembly, homodimer or homotetramer.

It is found in the cytoplasm. It carries out the reaction S-adenosyl 3-(methylsulfanyl)propylamine + putrescine = S-methyl-5'-thioadenosine + spermidine + H(+). The protein operates within amine and polyamine biosynthesis; spermidine biosynthesis; spermidine from putrescine: step 1/1. In terms of biological role, catalyzes the irreversible transfer of a propylamine group from the amino donor S-adenosylmethioninamine (decarboxy-AdoMet) to putrescine (1,4-diaminobutane) to yield spermidine. The sequence is that of Polyamine aminopropyltransferase from Clostridium perfringens (strain SM101 / Type A).